We begin with the raw amino-acid sequence, 142 residues long: Coactosin-like protein (142 aa).

Ala-2 carries the N-acetylalanine modification. Residues 2-130 (ATKIDKEACR…EEDFIKNELK (129 aa)) form the ADF-H domain. The flexible and important for F-actin binding stretch occupies residues 66–75 (TGDAMSKRSK). An N6-acetyllysine mark is found at Lys-102 and Lys-126.

This sequence belongs to the actin-binding proteins ADF family. Coactosin subfamily. In terms of assembly, interacts with 5-lipoxygenase (ALOX5/5LO) in a calcium-independent manner. Binds to F-actin with a stoichiometry of 1:2.

The protein localises to the cytoplasm. It is found in the cytoskeleton. Its subcellular location is the nucleus. Functionally, binds to F-actin in a calcium-independent manner. Has no direct effect on actin depolymerization. Acts as a chaperone for ALOX5 (5LO), influencing both its stability and activity in leukotrienes synthesis. This Bos taurus (Bovine) protein is Coactosin-like protein (COTL1).